A 284-amino-acid polypeptide reads, in one-letter code: Proton-translocating ferredoxin:NAD(+) oxidoreductase complex subunit B (284 aa).

The hydrophobic stretch occupies residues Met-1–Asn-26. The region spanning Glu-32 to Lys-92 is the 4Fe-4S domain. [4Fe-4S] cluster is bound by residues Cys-49, Cys-52, Cys-57, Cys-75, Cys-138, Cys-142, Cys-148, Cys-152, Cys-172, Cys-175, Cys-178, Cys-182, Cys-217, Cys-220, Cys-223, Cys-227, Cys-246, Cys-249, Cys-254, and Cys-258. 4Fe-4S ferredoxin-type domains follow at residues Gly-133–Asn-162, Gly-163–Val-192, Gly-206–Asn-237, and Ala-239–Gly-269.

The protein belongs to the 4Fe4S bacterial-type ferredoxin family. RnfB subfamily. The complex is composed of six subunits: RnfA, RnfB, RnfC, RnfD, RnfE and RnfG. [4Fe-4S] cluster serves as cofactor.

It is found in the cell membrane. Part of a membrane-bound complex that couples electron transfer with translocation of ions across the membrane. Couples electron transfer from reduced ferredoxin to NAD(+) with translocation of H(+) out of the cell. Essential for energy conservation during autotrophic growth. Contributes to ATP synthesis during heterotrophic growth. In Clostridium ljungdahlii (strain ATCC 55383 / DSM 13528 / PETC), this protein is Proton-translocating ferredoxin:NAD(+) oxidoreductase complex subunit B.